Here is a 475-residue protein sequence, read N- to C-terminus: Adenosylhomocysteinase (475 aa).

Substrate contacts are provided by T61, D140, and E200. NAD(+) is bound at residue 201 to 203 (TTT). Residues K230 and D234 each contribute to the substrate site. Residues N235, 264 to 269 (GYGDVG), E287, N322, 343 to 345 (IGH), and N388 contribute to the NAD(+) site.

It belongs to the adenosylhomocysteinase family. Requires NAD(+) as cofactor.

The protein resides in the cytoplasm. It catalyses the reaction S-adenosyl-L-homocysteine + H2O = L-homocysteine + adenosine. Its pathway is amino-acid biosynthesis; L-homocysteine biosynthesis; L-homocysteine from S-adenosyl-L-homocysteine: step 1/1. Functionally, may play a key role in the regulation of the intracellular concentration of adenosylhomocysteine. The protein is Adenosylhomocysteinase of Paracidovorax citrulli (strain AAC00-1) (Acidovorax citrulli).